The primary structure comprises 326 residues: Vitamin B12 import system permease protein BtuC (326 aa).

9 helical membrane passes run 15–35 (WLLCLSVLMLLALLLSLCAGE), 61–81 (LAVLLVGAALAISGAVMQALF), 88–108 (PGLLGVSNGAGVGLIAAVLLG), 112–132 (LPNWALGLCAIAGALIITLIL), 146–166 (LLAGVALGIICSALMTWAIYF), 184–204 (GGVDWRQSWLMLALIPVLLWI), 240–260 (GWMVGVSVALAGAIGFIGLVI), 274–294 (VLLPGCALAGASAVLLADIVA), and 302–322 (ELPIGVVTATLGAPVFIWLLL).

The protein belongs to the binding-protein-dependent transport system permease family. FecCD subfamily. In terms of assembly, the complex is composed of two ATP-binding proteins (BtuD), two transmembrane proteins (BtuC) and a solute-binding protein (BtuF).

The protein resides in the cell inner membrane. In terms of biological role, part of the ABC transporter complex BtuCDF involved in vitamin B12 import. Involved in the translocation of the substrate across the membrane. This is Vitamin B12 import system permease protein BtuC from Shigella sonnei (strain Ss046).